The sequence spans 1793 residues: Brefeldin A-inhibited guanine nucleotide-exchange protein 2 (1793 aa).

An N-acetylalanine modification is found at Ala2. Disordered stretches follow at residues 45 to 71, 266 to 299, and 579 to 606; these read NSLQKSPPPSSSAATDSESESSVPGPL, TMSGSGSGSGSGGQDGAYGTTTVETTNPTDLLDS, and GSPQLANGNADESADGSDTYSESSGGTS. Residues 55 to 66 show a composition bias toward low complexity; that stretch reads SSAATDSESESS. The span at 270-281 shows a compositional bias: gly residues; that stretch reads SGSGSGSGGQDG. Composition is skewed to polar residues over residues 284–294 and 594–605; these read GTTTVETTNPT and GSDTYSESSGGT. At Ser595 the chain carries Phosphoserine. Residues 610–797 form the SEC7 domain; that stretch reads AIEQRRAYKL…RSLYERITKH (188 aa). Glu712 is a catalytic residue. The segment covering 1311 to 1327 has biased composition (polar residues); it reads NKYKGTSGKIPQSSLHS. Residues 1311 to 1333 are disordered; it reads NKYKGTSGKIPQSSLHSGKSGKQ.

As to quaternary structure, homodimer.

The protein localises to the cytoplasm. It localises to the cytosol. Its subcellular location is the membrane. With respect to regulation, inhibited by brefeldin A. In terms of biological role, activates the ARF proteins by exchanging bound GDP for free GTP. Plays a role in vesicular protein sorting. The protein is Brefeldin A-inhibited guanine nucleotide-exchange protein 2 (BIG2) of Arabidopsis thaliana (Mouse-ear cress).